A 160-amino-acid chain; its full sequence is SsrA-binding protein (160 aa).

Positions 134–160 (YDKRDTERERDSNRELHRAVRNKGKED) are disordered.

This sequence belongs to the SmpB family.

The protein localises to the cytoplasm. Its function is as follows. Required for rescue of stalled ribosomes mediated by trans-translation. Binds to transfer-messenger RNA (tmRNA), required for stable association of tmRNA with ribosomes. tmRNA and SmpB together mimic tRNA shape, replacing the anticodon stem-loop with SmpB. tmRNA is encoded by the ssrA gene; the 2 termini fold to resemble tRNA(Ala) and it encodes a 'tag peptide', a short internal open reading frame. During trans-translation Ala-aminoacylated tmRNA acts like a tRNA, entering the A-site of stalled ribosomes, displacing the stalled mRNA. The ribosome then switches to translate the ORF on the tmRNA; the nascent peptide is terminated with the 'tag peptide' encoded by the tmRNA and targeted for degradation. The ribosome is freed to recommence translation, which seems to be the essential function of trans-translation. This Pseudomonas fluorescens (strain SBW25) protein is SsrA-binding protein.